Reading from the N-terminus, the 210-residue chain is Redox-sensing transcriptional repressor Rex (210 aa).

Residues lysine 17–phenylalanine 56 constitute a DNA-binding region (H-T-H motif). Glycine 91–glycine 96 is an NAD(+) binding site.

It belongs to the transcriptional regulatory Rex family. As to quaternary structure, homodimer.

It localises to the cytoplasm. Its function is as follows. Modulates transcription in response to changes in cellular NADH/NAD(+) redox state. The chain is Redox-sensing transcriptional repressor Rex from Clostridium novyi (strain NT).